The sequence spans 150 residues: UPF0039 protein C11D3.02c (150 aa).

An N-acetyltransferase domain is found at 9–150; sequence KYFNSLDVKE…IPHVEMRLEL (142 aa).

This sequence belongs to the UPF0039 (ElaA) family.

The sequence is that of UPF0039 protein C11D3.02c from Schizosaccharomyces pombe (strain 972 / ATCC 24843) (Fission yeast).